The primary structure comprises 1112 residues: Plasma membrane calcium-transporting ATPase 2 (1112 aa).

Residues 1 to 94 lie on the Cytoplasmic side of the membrane; it reads MGDMSNSDFY…NLIPPKKPKT (94 aa). Residues 95-115 traverse the membrane as a helical segment; the sequence is FLQLVWEALQDVTLIILEIAA. At 116–152 the chain is on the extracellular side; the sequence is LISLGLSFYHPPGETGGESCGAAAGGVEDEGEADAGW. Residues 153–173 form a helical membrane-spanning segment; it reads IEGAAILLSVVCVVLVTAFND. Residues 174-373 lie on the Cytoplasmic side of the membrane; sequence WSKEKQFRGL…KEKSVLQGKL (200 aa). Basic and acidic residues predominate over residues 298–311; it reads EKKEKKGGAVEDGH. The disordered stretch occupies residues 298-363; that stretch reads EKKEKKGGAV…KERKKVSAPK (66 aa). A compositionally biased stretch (polar residues) spans 312–327; sequence QNTGKMQDGNMESNQI. Basic and acidic residues predominate over residues 351-363; the sequence is ADEKERKKVSAPK. A helical transmembrane segment spans residues 374–393; sequence TKLAVQIGKAGLLMSAITVI. Over 394-426 the chain is Extracellular; it reads ILVLYFAIDNFVMQKRPWMPECTPIYIQYFVKF. Residues 427–444 traverse the membrane as a helical segment; it reads FIIGVTVLVVAVPEGLPL. Topologically, residues 445–858 are cytoplasmic; the sequence is AVTISLAYSV…MWGRNVYDSI (414 aa). The active-site 4-aspartylphosphate intermediate is the aspartate 482. Positions 803 and 807 each coordinate Mg(2+). A helical membrane pass occupies residues 859 to 878; the sequence is SKFLQFQLTVNVVAVIVAFT. The Extracellular portion of the chain corresponds to 879-888; the sequence is GACITQDSPL. Residues 889 to 909 form a helical membrane-spanning segment; it reads KAVQMLWVNLIMDTFASLALA. Over 910-929 the chain is Cytoplasmic; the sequence is TEPPTESLLKRKPYGRNKPL. Residues 930-952 traverse the membrane as a helical segment; that stretch reads ISSTMTKNILGHGVYQLIIIFTL. Over 953–970 the chain is Extracellular; it reads LFVGEQIFDIDSGRNAPL. Residues 971–992 form a helical membrane-spanning segment; sequence HSPPSEHYTIIFNTFVMMQLFN. At 993-1011 the chain is on the cytoplasmic side; it reads EINARKIHGERNVFDGIFR. A helical membrane pass occupies residues 1012–1033; it reads NPIFCSIVFGTFAVQIVIVQFG. At 1034-1043 the chain is on the extracellular side; the sequence is GKPFSCQPLD. The chain crosses the membrane as a helical span at residues 1044 to 1065; the sequence is LEKWMWCVFLGLGELVWGQVIA. Residues 1066 to 1112 are Cytoplasmic-facing; sequence TIPNSRLRFLRRAGQLTQKDELPEEDVNEENEEIDHAERELRRGQIL. Positions 1086 to 1112 are disordered; the sequence is ELPEEDVNEENEEIDHAERELRRGQIL. Over residues 1087–1098 the composition is skewed to acidic residues; that stretch reads LPEEDVNEENEE. Over residues 1099-1112 the composition is skewed to basic and acidic residues; sequence IDHAERELRRGQIL. Residues 1106 to 1112 are calmodulin-binding subdomain A; it reads LRRGQIL.

The protein belongs to the cation transport ATPase (P-type) (TC 3.A.3) family. Type IIB subfamily.

Its subcellular location is the cell membrane. It catalyses the reaction Ca(2+)(in) + ATP + H2O = Ca(2+)(out) + ADP + phosphate + H(+). In terms of biological role, this magnesium-dependent enzyme catalyzes the hydrolysis of ATP coupled with the transport of calcium out of the cell. The sequence is that of Plasma membrane calcium-transporting ATPase 2 (atp2b2) from Oreochromis mossambicus (Mozambique tilapia).